The chain runs to 107 residues: Phosphoribosyl-ATP pyrophosphatase (107 aa).

It belongs to the PRA-PH family.

The protein localises to the cytoplasm. The catalysed reaction is 1-(5-phospho-beta-D-ribosyl)-ATP + H2O = 1-(5-phospho-beta-D-ribosyl)-5'-AMP + diphosphate + H(+). It participates in amino-acid biosynthesis; L-histidine biosynthesis; L-histidine from 5-phospho-alpha-D-ribose 1-diphosphate: step 2/9. The chain is Phosphoribosyl-ATP pyrophosphatase from Methylobacterium radiotolerans (strain ATCC 27329 / DSM 1819 / JCM 2831 / NBRC 15690 / NCIMB 10815 / 0-1).